Reading from the N-terminus, the 184-residue chain is MNRPVKGVADKAEKSKVKRKTREELEREARERKRDKKHRGHSAGSRTQEKASTDQNSGQRKVADPRIGSKKPVQLGVLDSAIVKPKPKSKPSEPVEKVVAAKPTMSPEEELAMLENDTRLDALLDRLDSGETLSAKDQSWVDETLDRIDILMEELGIELGDDDEEEQQEDMLQLLKRNNPKDAL.

Disordered regions lie at residues 1–106 and 159–184; these read MNRP…PTMS and LGDD…KDAL. Positions 8–32 are enriched in basic and acidic residues; that stretch reads VADKAEKSKVKRKTREELEREARER. Over residues 159–169 the composition is skewed to acidic residues; the sequence is LGDDDEEEQQE.

It belongs to the YihI family. In terms of assembly, interacts with Der.

Functionally, a GTPase-activating protein (GAP) that modifies Der/EngA GTPase function. May play a role in ribosome biogenesis. This Pectobacterium atrosepticum (strain SCRI 1043 / ATCC BAA-672) (Erwinia carotovora subsp. atroseptica) protein is Der GTPase-activating protein YihI.